Consider the following 780-residue polypeptide: Pentatricopeptide repeat-containing protein At1g79540 (780 aa).

PPR repeat units follow at residues 91–125, 126–160, 161–196, 197–231, 232–266, 267–301, 302–336, 337–371, 372–406, 407–441, 442–476, 481–515, 516–550, 551–585, 653–687, 688–722, and 723–758; these read SRES…GVSV, DSYC…DCRP, DVFT…NCSP, NLYT…GISP, NRVT…GNYP, DSVA…GFVL, GLRG…NIKP, DIIL…GISP, DTYC…ESFP, DACT…GCSP, SVAT…RPAS, LSHS…GSSP, DIVS…GLSP, DSVT…RHSP, TLGP…KILV, TPPS…NFKL, and MPRV…GYNV.

The protein belongs to the PPR family. P subfamily.

The polypeptide is Pentatricopeptide repeat-containing protein At1g79540 (Arabidopsis thaliana (Mouse-ear cress)).